Reading from the N-terminus, the 418-residue chain is Equilibrative nucleotide transporter 4 (418 aa).

11 consecutive transmembrane segments (helical) span residues 20-40, 54-74, 85-105, 108-128, 147-169, 186-206, 264-284, 291-311, 326-346, 353-373, and 392-412; these read MVVC…MLTI, SRVF…ILAY, ILTG…LDLT, GHGG…FGLA, LIQS…RLIT, IFLA…AYVF, HAVN…GFLY, GLGD…DLFG, KALT…YFTA, WMIM…VCIM, and LVVF…LWLI.

It belongs to the SLC29A/ENT transporter (TC 2.A.57) family. Expressed in leaves and at lowe levels in stems and flowers.

The protein localises to the cell membrane. Nucleoside transporter that can mediate uptake of adenosine, uridine, guanosine or cytidine when expressed in a heterologous system (yeast). The chain is Equilibrative nucleotide transporter 4 (ENT4) from Arabidopsis thaliana (Mouse-ear cress).